Reading from the N-terminus, the 256-residue chain is Trypsin CFT-1 (256 aa).

The N-terminal stretch at Met-1 to Ala-17 is a signal peptide. Positions Leu-18–Arg-24 are cleaved as a propeptide — activation peptide. One can recognise a Peptidase S1 domain in the interval Ile-25–Ala-256. Cys-55 and Cys-71 are oxidised to a cystine. Catalysis depends on charge relay system residues His-70 and Asp-115. Disulfide bonds link Cys-180-Cys-197 and Cys-209-Cys-233. The Charge relay system role is filled by Ser-213.

The protein belongs to the peptidase S1 family.

The protein localises to the secreted. Its subcellular location is the extracellular space. It catalyses the reaction Preferential cleavage: Arg-|-Xaa, Lys-|-Xaa.. Responsible for the activation of delta-endotoxin from Bacillus thuringiensis. The sequence is that of Trypsin CFT-1 from Choristoneura fumiferana (Spruce budworm moth).